Consider the following 255-residue polypeptide: MSDSDASRPSAIASDGPDAAGKHASGAPWRNFYGRFKGKTLKPNQVRDLDEMLPELSPGAVGWDENPEREPLDLEAQFQGRDVWLEVGFGGGEHLVHQAESNPDVGIIGAEPYVNGVAMLLGKLRKSSAENVRVHAGDARDLMDVLPAQSLSRAFLLYPDPWPKARHHRRRFVTQEHLEPLARVLKPGAIFRVATDIPDYVRQTLEEVPKAGFKWLAEGPEDWRKPWGDWISTRYEQKALREGRTPHYLTFQRQD.

Residues 1–29 (MSDSDASRPSAIASDGPDAAGKHASGAPW) form a disordered region. Residues Glu-86, Glu-111, Asp-138, and Asp-160 each coordinate S-adenosyl-L-methionine. Asp-160 is an active-site residue. Residues Lys-164, Asp-196, and 233–236 (TRYE) contribute to the substrate site.

The protein belongs to the class I-like SAM-binding methyltransferase superfamily. TrmB family.

The enzyme catalyses guanosine(46) in tRNA + S-adenosyl-L-methionine = N(7)-methylguanosine(46) in tRNA + S-adenosyl-L-homocysteine. Its pathway is tRNA modification; N(7)-methylguanine-tRNA biosynthesis. Its function is as follows. Catalyzes the formation of N(7)-methylguanine at position 46 (m7G46) in tRNA. The polypeptide is tRNA (guanine-N(7)-)-methyltransferase (Ruegeria sp. (strain TM1040) (Silicibacter sp.)).